Here is a 338-residue protein sequence, read N- to C-terminus: Glycerol-3-phosphate dehydrogenase [NAD(P)+] (338 aa).

Positions 14, 15, 35, and 109 each coordinate NADPH. Lys-109 and Gly-137 together coordinate sn-glycerol 3-phosphate. Position 141 (Ala-141) interacts with NADPH. Sn-glycerol 3-phosphate is bound by residues Lys-192, Asp-247, Ser-257, Arg-258, and Asn-259. The active-site Proton acceptor is the Lys-192. Arg-258 is a binding site for NADPH. Residues Leu-282 and Glu-284 each coordinate NADPH.

Belongs to the NAD-dependent glycerol-3-phosphate dehydrogenase family.

Its subcellular location is the cytoplasm. It catalyses the reaction sn-glycerol 3-phosphate + NAD(+) = dihydroxyacetone phosphate + NADH + H(+). It carries out the reaction sn-glycerol 3-phosphate + NADP(+) = dihydroxyacetone phosphate + NADPH + H(+). It participates in membrane lipid metabolism; glycerophospholipid metabolism. Catalyzes the reduction of the glycolytic intermediate dihydroxyacetone phosphate (DHAP) to sn-glycerol 3-phosphate (G3P), the key precursor for phospholipid synthesis. The protein is Glycerol-3-phosphate dehydrogenase [NAD(P)+] of Rickettsia rickettsii (strain Iowa).